The following is a 213-amino-acid chain: Phosphoenolpyruvate guanylyltransferase (213 aa).

Residues Thr146, Gly161, and Ser164 each contribute to the phosphoenolpyruvate site.

It belongs to the CofC family.

The enzyme catalyses phosphoenolpyruvate + GTP + H(+) = enolpyruvoyl-2-diphospho-5'-guanosine + diphosphate. It participates in cofactor biosynthesis; coenzyme F420 biosynthesis. In terms of biological role, guanylyltransferase that catalyzes the activation of phosphoenolpyruvate (PEP) as enolpyruvoyl-2-diphospho-5'-guanosine, via the condensation of PEP with GTP. It is involved in the biosynthesis of coenzyme F420, a hydride carrier cofactor. This Mycolicibacterium vanbaalenii (strain DSM 7251 / JCM 13017 / BCRC 16820 / KCTC 9966 / NRRL B-24157 / PYR-1) (Mycobacterium vanbaalenii) protein is Phosphoenolpyruvate guanylyltransferase.